Reading from the N-terminus, the 117-residue chain is Large ribosomal subunit protein uL18 (117 aa).

This sequence belongs to the universal ribosomal protein uL18 family. As to quaternary structure, part of the 50S ribosomal subunit; part of the 5S rRNA/L5/L18/L25 subcomplex. Contacts the 5S and 23S rRNAs.

Its function is as follows. This is one of the proteins that bind and probably mediate the attachment of the 5S RNA into the large ribosomal subunit, where it forms part of the central protuberance. This is Large ribosomal subunit protein uL18 from Enterobacter sp. (strain 638).